The following is a 209-amino-acid chain: Thymidylate kinase (209 aa).

An ATP-binding site is contributed by 11–18; it reads GIEGAGKT.

The protein belongs to the thymidylate kinase family.

The catalysed reaction is dTMP + ATP = dTDP + ADP. Phosphorylation of dTMP to form dTDP in both de novo and salvage pathways of dTTP synthesis. The sequence is that of Thymidylate kinase (tmk) from Pasteurella multocida (strain Pm70).